Consider the following 180-residue polypeptide: NAD(P)H-quinone oxidoreductase subunit I, chloroplastic (180 aa).

2 consecutive 4Fe-4S ferredoxin-type domains span residues 55-84 (GRIH…VNWR) and 95-124 (LNYS…MTEE). Positions 64, 67, 70, 74, 104, 107, 110, and 114 each coordinate [4Fe-4S] cluster.

It belongs to the complex I 23 kDa subunit family. In terms of assembly, NDH is composed of at least 16 different subunits, 5 of which are encoded in the nucleus. Requires [4Fe-4S] cluster as cofactor.

It is found in the plastid. It localises to the chloroplast thylakoid membrane. It catalyses the reaction a plastoquinone + NADH + (n+1) H(+)(in) = a plastoquinol + NAD(+) + n H(+)(out). The catalysed reaction is a plastoquinone + NADPH + (n+1) H(+)(in) = a plastoquinol + NADP(+) + n H(+)(out). Its function is as follows. NDH shuttles electrons from NAD(P)H:plastoquinone, via FMN and iron-sulfur (Fe-S) centers, to quinones in the photosynthetic chain and possibly in a chloroplast respiratory chain. The immediate electron acceptor for the enzyme in this species is believed to be plastoquinone. Couples the redox reaction to proton translocation, and thus conserves the redox energy in a proton gradient. The protein is NAD(P)H-quinone oxidoreductase subunit I, chloroplastic of Platanus occidentalis (Sycamore).